Reading from the N-terminus, the 865-residue chain is MIEGVTELATPNVPPAPPSPSAMRRALRRARDGVSLNLDEAVVLLHARGDDLADLCRSAARVRDAGLESAGRPGTITYSRNVFIPLTRLCRDRCHYCTFVTVPGKLRAEGKGMFLEPDEVLDIARRGAALGCKEALFTLGDRPEDRWPEAAQWLDERGYDSTLDYLRAVSILVLEETGLLPHLNPGVMSWAEIARLKPVAQSMGMMLETTATRLFTEKGQCHHGSPDKDPAVRLRAITDAGRLSVPYTTGILVGIGETLTERAESIMAIRKQHKAFGHIQEVIVQNFRAKDDTAMRDAPDAGFDEFRATIAVTRLLLGPDVPVQAPPNLVSQQECLALIEAGIDDWGGVSPVTPDHVNPERPWPNLDTLRELTEASGFTLVERTSAHPKYVRAGNPWIDPRIGAHVAALTDPVTGLAKADALPVGLPWQEPDESWESAGRTDLNIAIDTEGRNTEARSDAALGQDVVGAFGDWDTIREQVRDLAVNAPERLDSDVLAALRAAERDPAGLSDDQYLALATADGAELDAVAALADQLRRDTVGDDVTYVVNRNINFTNICYTGCRFCAFAQRKGDADAFTLSTEEVADRAWEAYVDGATEVCMQGGIDPDLPVTGYADLVRAVKRRVPSMHVHAFSPMEIVNGASRGGESIADWLTALKEAGLDTIPGTAAEILDDEVRWVLTKGKLPSSAWIEVITTAHRVGLRSSSTMMYGHVDNPSHWVGHLRVLRGIQDETGGFTEFVLLPFVHQSAPLYLAGAARPGPTIRDNRAAHALARIMLHGRIDNIQTSWVKLGIAGTRVMLQGGANDLGGTLMEETISRMAGSQHGSAKTVAELAEIAEGIGRPVRERTTVYGRVDRRPAPIVPVG.

The interval 1–21 is disordered; that stretch reads MIEGVTELATPNVPPAPPSPS. Radical SAM core domains are found at residues 76-320 and 544-785; these read ITYS…LGPD and VTYV…DNIQ. The tract at residues 77–409 is cofG-like; it reads TYSRNVFIPL…PRIGAHVAAL (333 aa). Positions 90, 94, 97, 558, 562, and 565 each coordinate [4Fe-4S] cluster. Residues 521–854 form a cofH-like region; it reads DGAELDAVAA…RERTTVYGRV (334 aa).

The protein in the N-terminal section; belongs to the radical SAM superfamily. CofG family. This sequence in the C-terminal section; belongs to the radical SAM superfamily. CofH family. The cofactor is [4Fe-4S] cluster.

It carries out the reaction 5-amino-6-(D-ribitylamino)uracil + L-tyrosine + S-adenosyl-L-methionine = 5-amino-5-(4-hydroxybenzyl)-6-(D-ribitylimino)-5,6-dihydrouracil + 2-iminoacetate + 5'-deoxyadenosine + L-methionine + H(+). It catalyses the reaction 5-amino-5-(4-hydroxybenzyl)-6-(D-ribitylimino)-5,6-dihydrouracil + S-adenosyl-L-methionine = 7,8-didemethyl-8-hydroxy-5-deazariboflavin + 5'-deoxyadenosine + L-methionine + NH4(+) + H(+). It participates in cofactor biosynthesis; coenzyme F0 biosynthesis. Catalyzes the radical-mediated synthesis of 7,8-didemethyl-8-hydroxy-5-deazariboflavin (FO) from 5-amino-6-(D-ribitylamino)uracil and L-tyrosine. The polypeptide is FO synthase (fbiC) (Nocardia farcinica (strain IFM 10152)).